Here is a 333-residue protein sequence, read N- to C-terminus: Taste receptor type 2 member 38 (333 aa).

Residues 1–17 (MLTLTHICTVSYEVRST) are Extracellular-facing. Residues 18–38 (FLFISVLEFAVGFLTNAFISL) traverse the membrane as a helical segment. Topologically, residues 39-55 (VNFWDVVKRQPLSNSDC) are cytoplasmic. A helical membrane pass occupies residues 56-76 (VLLCLSISRLFLHGLLFLSAI). At 77-94 (QLTHFQKLSEPLNHSYQV) the chain is on the extracellular side. Residues 95-115 (ILMLWMIANQANLWLAACLSL) traverse the membrane as a helical segment. Residues 116 to 142 (LYCSKLIRFSHTFLICLASWVSRKISQ) lie on the Cytoplasmic side of the membrane. The helical transmembrane segment at 143–163 (MLLGIILCSCICTVLCVWCFF) threads the bilayer. Residues 164 to 190 (GRLHFTVTTVLFMNNNTRLNWQIKDLN) are Extracellular-facing. An N-linked (GlcNAc...) asparagine glycan is attached at Asn-178. Residues 191–211 (LFYSFLFCYLWSVPPFLLFLV) traverse the membrane as a helical segment. Topologically, residues 212-251 (SSGMLTVSLGRHMRTMKVYTRDSRDPSLEAHIKALKSLVS) are cytoplasmic. A helical transmembrane segment spans residues 252-272 (FFCFFVISSCAAFISVPLLIL). Over 273-276 (WHDK) the chain is Extracellular. A helical membrane pass occupies residues 277 to 297 (IGVMVCVGIMAACPSGHAAVL). Residues 298-333 (ISGNAKLRRAVTTILLWAQSSLKVRADHMADSRTLC) lie on the Cytoplasmic side of the membrane.

It belongs to the G-protein coupled receptor T2R family.

The protein resides in the membrane. Receptor that may play a role in the perception of bitterness and is gustducin-linked. May play a role in sensing the chemical composition of the gastrointestinal content. The activity of this receptor may stimulate alpha gustducin, mediate PLC-beta-2 activation and lead to the gating of TRPM5. The chain is Taste receptor type 2 member 38 (TAS2R38) from Papio hamadryas (Hamadryas baboon).